Consider the following 483-residue polypeptide: MRFVVRLFPEISIKSAPVRKRWTKMLTDNLRLMAKRIHPTARVNKEWDRIEVTAKVDDPVVEGQLIDMLARTPGIANFSHVQTHPFESLHDIYELVQASWGDQLKGKTFCVRVKRTGNHDFTSTEVERYVGGGLNQNNPTGGVKLKDPDVSIGLEVKDDQVYLVTKKYQGLGGFPMGTQESVLSLISGGYDSTVASFQMIKRGLRTHYCFFNLGGREHELAVKEIAFFLWNRFGSTHRVRFISVPFEGVVGEILQKVGPSNMGVVLKRMMLRAGERIAERGGIEAMVTGEAVAQVSSQTIPNLSVIDSVTDMMVLRPLIVMDKRDIIDISRKIGAEEFSAAVPEYCGVISVKPSAKVNRAKLEAEEEKFDFSILEHALENAVVQSIDEVMDDAQELAEVELVSELPVSAKVIDIRHHTEQELRPLTVEGREVLEIPFYQLSTAYAELDKAVNYYLFCDKGVMSGLHARHLLDAGYTNVGVYRP.

The THUMP domain maps to 63–167 (GQLIDMLART…DDQVYLVTKK (105 aa)). Residues 185 to 186 (LI), lysine 267, glycine 289, and glutamine 298 contribute to the ATP site. Cysteine 346 and cysteine 457 are joined by a disulfide. The Rhodanese domain occupies 405 to 483 (LPVSAKVIDI…GYTNVGVYRP (79 aa)). Cysteine 457 (cysteine persulfide intermediate) is an active-site residue.

It belongs to the ThiI family.

The protein resides in the cytoplasm. The enzyme catalyses [ThiI sulfur-carrier protein]-S-sulfanyl-L-cysteine + a uridine in tRNA + 2 reduced [2Fe-2S]-[ferredoxin] + ATP + H(+) = [ThiI sulfur-carrier protein]-L-cysteine + a 4-thiouridine in tRNA + 2 oxidized [2Fe-2S]-[ferredoxin] + AMP + diphosphate. It catalyses the reaction [ThiS sulfur-carrier protein]-C-terminal Gly-Gly-AMP + S-sulfanyl-L-cysteinyl-[cysteine desulfurase] + AH2 = [ThiS sulfur-carrier protein]-C-terminal-Gly-aminoethanethioate + L-cysteinyl-[cysteine desulfurase] + A + AMP + 2 H(+). It participates in cofactor biosynthesis; thiamine diphosphate biosynthesis. Catalyzes the ATP-dependent transfer of a sulfur to tRNA to produce 4-thiouridine in position 8 of tRNAs, which functions as a near-UV photosensor. Also catalyzes the transfer of sulfur to the sulfur carrier protein ThiS, forming ThiS-thiocarboxylate. This is a step in the synthesis of thiazole, in the thiamine biosynthesis pathway. The sulfur is donated as persulfide by IscS. The polypeptide is tRNA sulfurtransferase (Saccharophagus degradans (strain 2-40 / ATCC 43961 / DSM 17024)).